Reading from the N-terminus, the 383-residue chain is MHC class I polypeptide-related sequence A (383 aa).

The N-terminal stretch at 1-23 (MGLGPVFLLLAGIFPFAPPGAAA) is a signal peptide. Residues 24–307 (EPHSLRYNLT…GKVLVLQSHW (284 aa)) lie on the Extracellular side of the membrane. A glycan (N-linked (GlcNAc...) asparagine) is linked at Asn-31. An intrachain disulfide couples Cys-59 to Cys-64. Residue Asn-79 is glycosylated (N-linked (GlcNAc...) asparagine). Residues Cys-119 and Cys-187 are joined by a disulfide bond. The Ig-like C1-type domain occupies 207-296 (PMVNVTRSEA…SGNHSTHPVP (90 aa)). 3 N-linked (GlcNAc...) asparagine glycosylation sites follow: Asn-210, Asn-220, and Asn-261. A disulfide bond links Cys-225 and Cys-282. The helical transmembrane segment at 308–328 (QTFHVSAVAAAAIFVIIIFYV) threads the bilayer. Residues 329–383 (RCCKKKTSAAEGPELVSLQVLDQHPVGTSDHRDATQLGFQPLMSDLGSTGSTEGA) are Cytoplasmic-facing. 2 S-palmitoyl cysteine lipidation sites follow: Cys-330 and Cys-331.

The protein belongs to the MHC class I family. MIC subfamily. In terms of assembly, unlike classical MHC class I molecules, does not form a heterodimer with beta-2-microglobulin. Binds as a monomer to a KLRK1/NKG2D homodimer. KLRK1 forms a complex with HCST/DAP10 in which KLRK1 binds MICA while HCST acts as an adapter molecule which enables signal transduction. Interacts with PDIA6 on the surface of tumor cells, leading to disulfide bond reduction which is required for release of MICA from tumor cells. As to quaternary structure, (Microbial infection) Interacts with human cytomegalovirus/HHV-5 protein UL142. Post-translationally, N-glycosylated. Glycosylation is not essential for interaction with KLRK1/NKG2D but enhances complex formation. Proteolytically cleaved and released from the cell surface of tumor cells which impairs KLRK1/NKG2D expression and T-cell activation. In terms of processing, palmitoylated on cysteine residues in the cytoplasmic tail leading to its association with membrane microdomains enriched in cholesterol. Post-translationally, N-glycosylation is necessary for cell surface expression. (Microbial infection) Ubiquitinated by human herpesvirus 8 protein K5, leading to degradation. Widely expressed with the exception of the central nervous system where it is absent. Expressed predominantly in gastric epithelium and also in monocytes, keratinocytes, endothelial cells, fibroblasts and in the outer layer of Hassal's corpuscles within the medulla of normal thymus. In skin, expressed mainly in the keratin layers, basal cells, ducts and follicles. Also expressed in many, but not all, epithelial tumors of lung, breast, kidney, ovary, prostate and colon. In thyomas, overexpressed in cortical and medullar epithelial cells. Tumors expressing MICA display increased levels of gamma delta T-cells.

The protein localises to the cell membrane. Its subcellular location is the cytoplasm. Widely expressed membrane-bound protein which acts as a ligand to stimulate an activating receptor KLRK1/NKG2D, expressed on the surface of essentially all human natural killer (NK), gammadelta T and CD8 alphabeta T-cells. Up-regulated in stressed conditions, such as viral and bacterial infections or DNA damage response, serves as signal of cellular stress, and engagement of KLRK1/NKG2D by MICA triggers NK-cells resulting in a range of immune effector functions, such as cytotoxicity and cytokine production. The chain is MHC class I polypeptide-related sequence A from Homo sapiens (Human).